The following is a 188-amino-acid chain: Elongation factor P (188 aa).

K34 bears the N6-(3,6-diaminohexanoyl)-5-hydroxylysine mark.

The protein belongs to the elongation factor P family. May be beta-lysylated on the epsilon-amino group of Lys-34 by the combined action of EpmA and EpmB, and then hydroxylated on the C5 position of the same residue by EpmC (if this protein is present). Lysylation is critical for the stimulatory effect of EF-P on peptide-bond formation. The lysylation moiety may extend toward the peptidyltransferase center and stabilize the terminal 3-CCA end of the tRNA. Hydroxylation of the C5 position on Lys-34 may allow additional potential stabilizing hydrogen-bond interactions with the P-tRNA.

The protein resides in the cytoplasm. Its pathway is protein biosynthesis; polypeptide chain elongation. Functionally, involved in peptide bond synthesis. Alleviates ribosome stalling that occurs when 3 or more consecutive Pro residues or the sequence PPG is present in a protein, possibly by augmenting the peptidyl transferase activity of the ribosome. Modification of Lys-34 is required for alleviation. The chain is Elongation factor P from Actinobacillus succinogenes (strain ATCC 55618 / DSM 22257 / CCUG 43843 / 130Z).